Consider the following 449-residue polypeptide: Phosphoglucosamine mutase (449 aa).

The active-site Phosphoserine intermediate is the Ser-101. Positions 101, 241, 243, and 245 each coordinate Mg(2+). At Ser-101 the chain carries Phosphoserine.

It belongs to the phosphohexose mutase family. It depends on Mg(2+) as a cofactor. In terms of processing, activated by phosphorylation.

The catalysed reaction is alpha-D-glucosamine 1-phosphate = D-glucosamine 6-phosphate. Its function is as follows. Catalyzes the conversion of glucosamine-6-phosphate to glucosamine-1-phosphate. The protein is Phosphoglucosamine mutase of Ruminiclostridium cellulolyticum (strain ATCC 35319 / DSM 5812 / JCM 6584 / H10) (Clostridium cellulolyticum).